The following is a 334-amino-acid chain: Formamidase (334 aa).

In terms of domain architecture, CN hydrolase spans 14–260 (FLVAAIQFPV…WEIVTGEIYP (247 aa)). Glutamate 60 (proton acceptor) is an active-site residue. Residue lysine 133 is the Proton donor of the active site. The active-site Nucleophile is cysteine 166.

The protein belongs to the carbon-nitrogen hydrolase superfamily. Aliphatic amidase family.

It carries out the reaction formamide + H2O = formate + NH4(+). Is an aliphatic amidase with a restricted substrate specificity, as it only hydrolyzes formamide. This is Formamidase from Helicobacter pylori (strain J99 / ATCC 700824) (Campylobacter pylori J99).